The sequence spans 229 residues: tRNA (guanine-N(7)-)-methyltransferase (229 aa).

Residues glutamate 62, glutamate 87, aspartate 114, and aspartate 137 each coordinate S-adenosyl-L-methionine. Aspartate 137 is an active-site residue. Lysine 141 serves as a coordination point for substrate. Residues 143–148 (KHNKRR) are interaction with RNA. Substrate-binding positions include aspartate 173 and 208–211 (TKFE).

Belongs to the class I-like SAM-binding methyltransferase superfamily. TrmB family.

It catalyses the reaction guanosine(46) in tRNA + S-adenosyl-L-methionine = N(7)-methylguanosine(46) in tRNA + S-adenosyl-L-homocysteine. It participates in tRNA modification; N(7)-methylguanine-tRNA biosynthesis. Its function is as follows. Catalyzes the formation of N(7)-methylguanine at position 46 (m7G46) in tRNA. The sequence is that of tRNA (guanine-N(7)-)-methyltransferase from Francisella tularensis subsp. novicida (strain U112).